The chain runs to 955 residues: Glycine dehydrogenase (decarboxylating) (955 aa).

The residue at position 702 (lysine 702) is an N6-(pyridoxal phosphate)lysine.

Belongs to the GcvP family. In terms of assembly, the glycine cleavage system is composed of four proteins: P, T, L and H. It depends on pyridoxal 5'-phosphate as a cofactor.

The catalysed reaction is N(6)-[(R)-lipoyl]-L-lysyl-[glycine-cleavage complex H protein] + glycine + H(+) = N(6)-[(R)-S(8)-aminomethyldihydrolipoyl]-L-lysyl-[glycine-cleavage complex H protein] + CO2. In terms of biological role, the glycine cleavage system catalyzes the degradation of glycine. The P protein binds the alpha-amino group of glycine through its pyridoxal phosphate cofactor; CO(2) is released and the remaining methylamine moiety is then transferred to the lipoamide cofactor of the H protein. The protein is Glycine dehydrogenase (decarboxylating) of Stenotrophomonas maltophilia (strain K279a).